The chain runs to 381 residues: Guanine nucleotide-binding protein subunit alpha-12 (381 aa).

Residue Cys11 is the site of S-palmitoyl cysteine attachment. The G-alpha domain occupies 56 to 381; it reads RLVKILLLGA…QENLKDIMLQ (326 aa). Residues 59–72 form a G1 motif region; it reads KILLLGAGESGKST. GTP is bound by residues 67 to 72 and 202 to 205; these read ESGKST and LLAR. Ser71 lines the Mg(2+) pocket. The tract at residues 200 to 208 is G2 motif; it reads DILLARKAT. Mg(2+) is bound at residue Thr208. Thr208 is modified (phosphothreonine). The G3 motif stretch occupies residues 223–232; the sequence is FKMVDVGGQR. The G4 motif stretch occupies residues 292–299; the sequence is ILFLNKMD. GTP contacts are provided by residues 296-299 and Ala353; that span reads NKMD. Positions 351–356 are G5 motif; that stretch reads TTAIDT.

The protein belongs to the G-alpha family. G(12) subfamily. As to quaternary structure, g proteins are composed of 3 units; alpha, beta and gamma. The alpha chain contains the guanine nucleotide binding site. Interacts with UBXD5. Interacts (in GTP-bound form) with PPP5C (via TPR repeats); activates PPP5C phosphatase activity and translocates PPP5C to the cell membrane. Interacts with RGS22. Interacts (via N-terminus) with NAPA; the interaction promotes CDH5 localization to plasma membrane. Interacts with CTNND1 (via N-terminus); the interaction regulates CDH1-mediated cell-cell adhesion. Interacts with PPP2R1A; the interaction promotes protein phosphatase 2A activation causing dephosphorylation of MAPT. Interacts (in GTP-bound form) with ARHGEF1. Interacts (in GTP-bound form) with ARHGEF11 (via RGS domain). Interacts (in GTP-bound form) with ARHGEF12 (via RGS domain).

It is found in the cell membrane. The protein resides in the lateral cell membrane. Its subcellular location is the cytoplasm. In terms of biological role, guanine nucleotide-binding proteins (G proteins) are involved as modulators or transducers in various transmembrane signaling systems. Activates effector molecule RhoA by binding and activating RhoGEFs (ARHGEF12/LARG). GNA12-dependent Rho signaling subsequently regulates transcription factor AP-1 (activating protein-1). GNA12-dependent Rho signaling also regulates protein phosphatese 2A activation causing dephosphorylation of its target proteins. Promotes tumor cell invasion and metastasis by activating RhoA/ROCK signaling pathway and up-regulating pro-inflammatory cytokine production. Inhibits CDH1-mediated cell adhesion in process independent from Rho activation. Together with NAPA promotes CDH5 localization to plasma membrane. May play a role in the control of cell migration through the TOR signaling cascade. This chain is Guanine nucleotide-binding protein subunit alpha-12 (GNA12), found in Homo sapiens (Human).